The primary structure comprises 292 residues: GTP cyclohydrolase FolE2 (292 aa).

This sequence belongs to the GTP cyclohydrolase IV family.

It carries out the reaction GTP + H2O = 7,8-dihydroneopterin 3'-triphosphate + formate + H(+). Its pathway is cofactor biosynthesis; 7,8-dihydroneopterin triphosphate biosynthesis; 7,8-dihydroneopterin triphosphate from GTP: step 1/1. Functionally, converts GTP to 7,8-dihydroneopterin triphosphate. The protein is GTP cyclohydrolase FolE2 of Staphylococcus epidermidis (strain ATCC 12228 / FDA PCI 1200).